The following is a 305-amino-acid chain: Secreted mono- and diacylglycerol lipase A (305 aa).

The N-terminal stretch at 1–26 (MRLSFFTALSAVASLGYALPGKLQSR) is a signal peptide. Disulfide bonds link Cys62-Cys67 and Cys129-Cys132. The active-site Nucleophile is the Ser171. Asp225 acts as the Charge relay system in catalysis. Residue Asn251 is glycosylated (N-linked (GlcNAc...) asparagine). The active-site Charge relay system is His285. The propeptide at 303–305 (KRV) is removed in mature form.

This sequence belongs to the AB hydrolase superfamily. Lipase family. Class 3 subfamily. Multiple forms of this lipase are due to the presence of different carbohydrates, which may contribute to the stability of this lipase but not to the enzyme activity.

It localises to the secreted. It catalyses the reaction a monoacylglycerol + H2O = glycerol + a fatty acid + H(+). The enzyme catalyses a diacylglycerol + H2O = a monoacylglycerol + a fatty acid + H(+). Its activity is regulated as follows. Both Fe(3+) and Hg(2+) inhibit the activity significantly. In terms of biological role, secreted lipase strictly specific to mono- and diacylglycerol, but not triacylglycerol. Hydrolyzes long-chain monoacylglycerols most efficiently with the highest activities observed on 1- and 3- monopalmitoyl-sn-glycerol or 1-monostearoyl-rac-glycerol. Prefers to attack alpha positions to beta positions of monoacylglycerol, but shows no stereospecificity on mono- and diacylglycerol. The chain is Secreted mono- and diacylglycerol lipase A from Penicillium camembertii.